A 202-amino-acid polypeptide reads, in one-letter code: 3-isopropylmalate dehydratase small subunit (202 aa).

This sequence belongs to the LeuD family. LeuD type 1 subfamily. As to quaternary structure, heterodimer of LeuC and LeuD.

It carries out the reaction (2R,3S)-3-isopropylmalate = (2S)-2-isopropylmalate. Its pathway is amino-acid biosynthesis; L-leucine biosynthesis; L-leucine from 3-methyl-2-oxobutanoate: step 2/4. Its function is as follows. Catalyzes the isomerization between 2-isopropylmalate and 3-isopropylmalate, via the formation of 2-isopropylmaleate. The chain is 3-isopropylmalate dehydratase small subunit from Blochmanniella pennsylvanica (strain BPEN).